A 177-amino-acid chain; its full sequence is MIEIRFHGRGGQGAVTAAEILAKAAFEDGKYSQAFPFFGVERRGAPVMAFTRINDEPIRRRYQVYNPDYVVVLDEGLVDVVDVFSGLKEDGVVLLNTAGTFTSENAKIHTIDATGIALENLGRPIVNTVMLGAFAGVTGLVSIDSLIKIIKETFPGKIGDKNAEAARIAYEKMKHSG.

As to quaternary structure, heterotetramer of one alpha, one beta, one delta and one gamma chain.

It carries out the reaction 2 oxidized [2Fe-2S]-[ferredoxin] + pyruvate + CoA = 2 reduced [2Fe-2S]-[ferredoxin] + acetyl-CoA + CO2 + H(+). The protein is Pyruvate synthase subunit PorC (porC) of Methanothermobacter marburgensis (strain ATCC BAA-927 / DSM 2133 / JCM 14651 / NBRC 100331 / OCM 82 / Marburg) (Methanobacterium thermoautotrophicum).